The primary structure comprises 793 residues: MLGMSHNRLQSQGTEHDKFATQKLFAIWGQIQSYLFQVELLKRCDPTVGVRMINRLKLNVLMIYYLEKKMVPALKEQREMNLTPLTYGLWLALRRAKLEGELLLDALCEFKDGGNLRDFFRKSMSMCGDCPYHSTVELDTYGGKVSTEIKFLHDVENVLKQLNYCHLILKADTVENFMVSLDNYLLKTLGSGSVVPPELYDPSQPCSVCFEELCVTANSGDSTHKRIVRKICDHITKQINIRVNSDDMVTHLPHATYVPDDKRTTAQTALDVIQSTMRDTTTENDSNISVSKAAAAALDAHNVFLPASGDLYAISELQFWIASSGRKLHQPRGNTVESFADNLEALVSKERLFDLRTSIVETAVFDRRMDHFERVFAQEIEHMNAADRLLLGGRAAAPDDIIEALIKACYDHHMSAPLLKRLLYPDEAAHDALKTVLERVSSHCIGNDIQCQDGDGTCGERMNETGHFRTNDSFAMSTTSLGHDEWLEMVKSASSDVARRRKMYAERLTKKSLASLDKCITEQRHELEKMLRVNVYGEVLIDSYTALFNGFRSRKRLLEAVKNCCANIIDNRNSDDAFDAHRFMQTSLLKHRIDPAMLPSLTHKFFQLVNGPMFSHDRHRFAQPSNTALYFSVENVGLLPHLKEEMARFMFHSSRKTDWTVSKFRGFYDFSTIDNVTAAHRMAWKYIKELIFATALFSSVFKCGELHICRADSLQINSNGDYVWKNGIYITYETEYPLIMILGSESSTSETQNMTAIIDTDVFSLLYSILQYMAPVTADQVRVEQITNSHAPI.

A C3H1-type zinc finger spans residues 206–234; sequence CSVCFEELCVTANSGDSTHKRIVRKICDH. 697 to 704 provides a ligand contact to ATP; that stretch reads FSSVFKCG.

The protein belongs to the herpesviridae TRM1 protein family. In terms of assembly, associates with TRM2 and TRM3 to form the tripartite terminase complex. Interacts with portal protein.

It localises to the host nucleus. Component of the molecular motor that translocates viral genomic DNA in empty capsid during DNA packaging. Forms a tripartite terminase complex together with TRM2 and TRM3 in the host cytoplasm. Once the complex reaches the host nucleus, it interacts with the capsid portal vertex. This portal forms a ring in which genomic DNA is translocated into the capsid. TRM1 carries an endonuclease activity that plays an important role for the cleavage of concatemeric viral DNA into unit length genomes. In Gallid herpesvirus 2 (strain Chicken/Md5/ATCC VR-987) (GaHV-2), this protein is Tripartite terminase subunit 1.